The following is a 287-amino-acid chain: Nucleotide-binding protein MXAN_6564 (287 aa).

13–20 (GMSGSGKS) is a binding site for ATP. 62 to 65 (DVRE) provides a ligand contact to GTP.

The protein belongs to the RapZ-like family.

Functionally, displays ATPase and GTPase activities. The sequence is that of Nucleotide-binding protein MXAN_6564 from Myxococcus xanthus (strain DK1622).